A 201-amino-acid polypeptide reads, in one-letter code: Large ribosomal subunit protein uL4 (201 aa).

The disordered stretch occupies residues 44 to 68 (RAQKSRAEVSGSGRKPWRQKGTGRA).

The protein belongs to the universal ribosomal protein uL4 family. In terms of assembly, part of the 50S ribosomal subunit.

Functionally, one of the primary rRNA binding proteins, this protein initially binds near the 5'-end of the 23S rRNA. It is important during the early stages of 50S assembly. It makes multiple contacts with different domains of the 23S rRNA in the assembled 50S subunit and ribosome. Forms part of the polypeptide exit tunnel. In Buchnera aphidicola subsp. Acyrthosiphon pisum (strain APS) (Acyrthosiphon pisum symbiotic bacterium), this protein is Large ribosomal subunit protein uL4.